Consider the following 86-residue polypeptide: Venom metalloproteinase (86 aa).

Position 7 (Asp7) interacts with Ca(2+). Position 67 (His67) interacts with Zn(2+). Residue Glu68 is part of the active site. Zn(2+)-binding residues include His71 and His77.

It belongs to the venom metalloproteinase (M12B) family. Requires Zn(2+) as cofactor. As to expression, expressed by the venom gland.

The protein localises to the secreted. The protein is Venom metalloproteinase of Tityus serrulatus (Brazilian scorpion).